A 122-amino-acid polypeptide reads, in one-letter code: Large ribosomal subunit protein uL14c (122 aa).

The protein belongs to the universal ribosomal protein uL14 family. Part of the 50S ribosomal subunit.

It is found in the plastid. It localises to the chloroplast. In terms of biological role, binds to 23S rRNA. This chain is Large ribosomal subunit protein uL14c, found in Lactuca sativa (Garden lettuce).